Reading from the N-terminus, the 209-residue chain is Large ribosomal subunit protein uL4 (209 aa).

The segment at 45-78 (RQGTHKAKERAEVAGSTRKIKKQKGTGTARAGSA) is disordered.

This sequence belongs to the universal ribosomal protein uL4 family. In terms of assembly, part of the 50S ribosomal subunit.

Functionally, one of the primary rRNA binding proteins, this protein initially binds near the 5'-end of the 23S rRNA. It is important during the early stages of 50S assembly. It makes multiple contacts with different domains of the 23S rRNA in the assembled 50S subunit and ribosome. Its function is as follows. Forms part of the polypeptide exit tunnel. The chain is Large ribosomal subunit protein uL4 from Flavobacterium psychrophilum (strain ATCC 49511 / DSM 21280 / CIP 103535 / JIP02/86).